A 376-amino-acid polypeptide reads, in one-letter code: C-type lectin domain family 4 member M (376 aa).

At 1-49 (MSDSKEPRVQQLGLLEEDPTTSGIRLFPRDFQFQQIHGHKSSTGCLGHG) the chain is on the cytoplasmic side. The short motif at 14–15 (LL) is the Endocytosis signal element. Residues 50–70 (ALVLQLLSFTLLAGVLVAILV) form a helical; Signal-anchor for type II membrane protein membrane-spanning segment. Residues 71–376 (QVSKVPSSLS…KKPTVCFRDE (306 aa)) are Extracellular-facing. Asn92 is a glycosylation site (N-linked (GlcNAc...) asparagine). 6 tandem repeats follow at residues 108 to 130 (KLQE…PEKS), 131 to 153 (KLQE…PEKS), 154 to 176 (KLQE…PEKS), 177 to 199 (KLQE…PEKS), 200 to 222 (KLQE…PDQS), and 223 to 245 (KQQQ…CRHC). The tract at residues 108-246 (KLQEIYQELT…AFERLCRHCP (139 aa)) is 6 X approximate tandem repeats. Intrachain disulfides connect Cys242–Cys372, Cys245–Cys256, Cys273–Cys366, and Cys345–Cys358. Residues 251–367 (FFQGNCYFMS…CDVDNYWICK (117 aa)) enclose the C-type lectin domain. Glu336, Asn338, Ser340, Glu343, Asn354, and Asp355 together coordinate Ca(2+). A glycan (N-linked (GlcNAc...) asparagine) is linked at Asn338.

As to quaternary structure, homotetramer.

Its subcellular location is the membrane. Its function is as follows. Probable pathogen-recognition receptor involved in peripheral immune surveillance in liver. May mediate the endocytosis of pathogens which are subsequently degraded in lysosomal compartments. Probably recognizes in a calcium-dependent manner high mannose N-linked oligosaccharides in a variety of pathogen antigens. Is a receptor for ICAM3, probably by binding to mannose-like carbohydrates. In Gorilla gorilla gorilla (Western lowland gorilla), this protein is C-type lectin domain family 4 member M (CLEC4M).